The primary structure comprises 447 residues: ATP-dependent protease ATPase subunit HslU (447 aa).

ATP contacts are provided by residues Ile18, 60 to 65 (GVGKTE), Asp259, Glu325, and Arg397.

The protein belongs to the ClpX chaperone family. HslU subfamily. In terms of assembly, a double ring-shaped homohexamer of HslV is capped on each side by a ring-shaped HslU homohexamer. The assembly of the HslU/HslV complex is dependent on binding of ATP.

Its subcellular location is the cytoplasm. Its function is as follows. ATPase subunit of a proteasome-like degradation complex; this subunit has chaperone activity. The binding of ATP and its subsequent hydrolysis by HslU are essential for unfolding of protein substrates subsequently hydrolyzed by HslV. HslU recognizes the N-terminal part of its protein substrates and unfolds these before they are guided to HslV for hydrolysis. This is ATP-dependent protease ATPase subunit HslU from Burkholderia pseudomallei (strain K96243).